The following is a 434-amino-acid chain: 23S rRNA (uracil(1939)-C(5))-methyltransferase RlmD (434 aa).

A TRAM domain is found at 10–68; the sequence is RVTTRQIITVTVNDLDPFGQGVARHQGKALFVSGVLPQEQAEVVLVEDKKQYARAQVKR. [4Fe-4S] cluster-binding residues include Cys-81, Cys-87, Cys-90, and Cys-162. Positions 265, 294, 299, 315, 342, and 363 each coordinate S-adenosyl-L-methionine. Residue Cys-389 is the Nucleophile of the active site.

The protein belongs to the class I-like SAM-binding methyltransferase superfamily. RNA M5U methyltransferase family. RlmD subfamily.

It carries out the reaction uridine(1939) in 23S rRNA + S-adenosyl-L-methionine = 5-methyluridine(1939) in 23S rRNA + S-adenosyl-L-homocysteine + H(+). Its function is as follows. Catalyzes the formation of 5-methyl-uridine at position 1939 (m5U1939) in 23S rRNA. This is 23S rRNA (uracil(1939)-C(5))-methyltransferase RlmD from Klebsiella pneumoniae (strain 342).